The sequence spans 529 residues: ATP synthase F(1) complex catalytic subunit beta, mitochondrial (529 aa).

Residues 1-46 (MLSLVGRVASASASGALRGLSPSAALPQAQLLLRAAPAGVHPARDY) constitute a mitochondrion transit peptide. S106 carries an O-linked (GlcNAc) serine glycan. 3 positions are modified to N6-acetyllysine; alternate: K124, K133, and K161. 3 positions are modified to N6-succinyllysine; alternate: K124, K133, and K161. An N6-acetyllysine modification is found at K198. ADP contacts are provided by G209, V210, G211, K212, T213, and V214. Residue G209 participates in ATP binding. The phosphate site is built by G209, V210, G211, K212, and T213. Positions 211, 212, 213, and 214 each coordinate ATP. A Mg(2+)-binding site is contributed by T213. E238 serves as a coordination point for Mg(2+). Position 239 (R239) interacts with ATP. 2 positions are modified to N6-acetyllysine; alternate: K259 and K264. N6-succinyllysine; alternate occurs at positions 259 and 264. Phosphothreonine is present on T312. K426 bears the N6-acetyllysine mark. The residue at position 433 (S433) is a Phosphoserine. Residues K480 and K485 each carry the N6-acetyllysine modification. K522 carries the post-translational modification N6-acetyllysine; alternate. Position 522 is an N6-succinyllysine; alternate (K522). S529 carries the phosphoserine modification.

The protein belongs to the ATPase alpha/beta chains family. As to quaternary structure, homotrimer. Component of the ATP synthase complex composed at least of ATP5F1A/subunit alpha, ATP5F1B/subunit beta, ATP5MC1/subunit c (homooctomer), MT-ATP6/subunit a, MT-ATP8/subunit 8, ATP5ME/subunit e, ATP5MF/subunit f, ATP5MG/subunit g, ATP5MK/subunit k, ATP5MJ/subunit j, ATP5F1C/subunit gamma, ATP5F1D/subunit delta, ATP5F1E/subunit epsilon, ATP5PF/subunit F6, ATP5PB/subunit b, ATP5PD/subunit d, ATP5PO/subunit OSCP. ATP synthase complex consists of a soluble F(1) head domain (subunits alpha(3) and beta(3)) - the catalytic core - and a membrane F(0) domain - the membrane proton channel (subunits c, a, 8, e, f, g, k and j). These two domains are linked by a central stalk (subunits gamma, delta, and epsilon) rotating inside the F1 region and a stationary peripheral stalk (subunits F6, b, d, and OSCP). Interacts with PPIF. Interacts with BCL2L1 isoform BCL-X(L); the interaction mediates the association of BCL2L1 isoform BCL-X(L) with the mitochondrial membrane F(1)F(0) ATP synthase and enhances neurons metabolic efficiency. Interacts with CLN5 and PPT1. Interacts with S100A1; this interaction increases F1-ATPase activity. Interacts with MTLN. Interacts with TTC5/STRAP; the interaction results in decreased mitochondrial ATP production. In terms of processing, acetylation of Lys-133 is observed in liver mitochondria from fasted mice but not from fed mice.

The protein resides in the mitochondrion inner membrane. It catalyses the reaction ATP + H2O + 4 H(+)(in) = ADP + phosphate + 5 H(+)(out). In terms of biological role, catalytic subunit beta, of the mitochondrial membrane ATP synthase complex (F(1)F(0) ATP synthase or Complex V) that produces ATP from ADP in the presence of a proton gradient across the membrane which is generated by electron transport complexes of the respiratory chain. ATP synthase complex consist of a soluble F(1) head domain - the catalytic core - and a membrane F(1) domain - the membrane proton channel. These two domains are linked by a central stalk rotating inside the F(1) region and a stationary peripheral stalk. During catalysis, ATP synthesis in the catalytic domain of F(1) is coupled via a rotary mechanism of the central stalk subunits to proton translocation. In vivo, can only synthesize ATP although its ATP hydrolase activity can be activated artificially in vitro. With the subunit alpha (ATP5F1A), forms the catalytic core in the F(1) domain. This is ATP synthase F(1) complex catalytic subunit beta, mitochondrial from Mus musculus (Mouse).